A 354-amino-acid chain; its full sequence is Ribosomal RNA large subunit methyltransferase M (354 aa).

Residues S183, 216–219, D235, D255, and D271 contribute to the S-adenosyl-L-methionine site; that span reads SPGG. The active-site Proton acceptor is the K300.

It belongs to the class I-like SAM-binding methyltransferase superfamily. RNA methyltransferase RlmE family. RlmM subfamily. Monomer.

The protein localises to the cytoplasm. It catalyses the reaction cytidine(2498) in 23S rRNA + S-adenosyl-L-methionine = 2'-O-methylcytidine(2498) in 23S rRNA + S-adenosyl-L-homocysteine + H(+). Functionally, catalyzes the 2'-O-methylation at nucleotide C2498 in 23S rRNA. This is Ribosomal RNA large subunit methyltransferase M from Pseudomonas putida (strain ATCC 47054 / DSM 6125 / CFBP 8728 / NCIMB 11950 / KT2440).